A 367-amino-acid polypeptide reads, in one-letter code: MAHQKREATSDNGGGDEEWASKRPKVVGAAAEKEHILTSDASHETNGDEAQGGDASRKENTVSTNPCVSDEKAATNSNVSSGHGVILTSVEADAAEDKGCRHTMEDAWVLLPDASMESPGNLRCAHFAIYDGHGGRLAAEYAQKHLHQNVIAAGLPRELMDVKAAKKAIIEGFRRTDECLLQESTKGNWQDGATAVCVWVLGQTVVVANAGDAKAVLARSTSADGEGAVDDAKSQLKAIVLTREHKAIFPQERARIQKAGGSVGPNGRLQGRIEVSRALGDRQFKKVGLIATPDVHSFEVTRKDHFIILGCDGLWGVFGPGDAVEFVQNQLKETSSATLAVRRLVKEAVRERRCKDNCTAVLIVFKH.

Positions 1–79 are disordered; that stretch reads MAHQKREATS…DEKAATNSNV (79 aa). Basic and acidic residues predominate over residues 31–46; that stretch reads AEKEHILTSDASHETN. Residues 91–365 enclose the PPM-type phosphatase domain; it reads EADAAEDKGC…DNCTAVLIVF (275 aa). Residues D131, G132, D312, and D356 each coordinate Mn(2+).

It belongs to the PP2C family. Mg(2+) serves as cofactor. The cofactor is Mn(2+).

The catalysed reaction is O-phospho-L-seryl-[protein] + H2O = L-seryl-[protein] + phosphate. It catalyses the reaction O-phospho-L-threonyl-[protein] + H2O = L-threonyl-[protein] + phosphate. The chain is Probable protein phosphatase 2C 67 from Oryza sativa subsp. japonica (Rice).